The sequence spans 186 residues: Probable nicotinate-nucleotide adenylyltransferase (186 aa).

This sequence belongs to the NadD family.

The enzyme catalyses nicotinate beta-D-ribonucleotide + ATP + H(+) = deamido-NAD(+) + diphosphate. It participates in cofactor biosynthesis; NAD(+) biosynthesis; deamido-NAD(+) from nicotinate D-ribonucleotide: step 1/1. Its function is as follows. Catalyzes the reversible adenylation of nicotinate mononucleotide (NaMN) to nicotinic acid adenine dinucleotide (NaAD). The polypeptide is Probable nicotinate-nucleotide adenylyltransferase (Thermus thermophilus (strain ATCC 27634 / DSM 579 / HB8)).